The chain runs to 549 residues: Neurofilament light polypeptide (549 aa).

S2 is modified (N-acetylserine). A head region spans residues S2–Q92. O-linked (GlcNAc) threonine glycosylation is present at T21. R23 carries the post-translational modification Asymmetric dimethylarginine; alternate. The residue at position 23 (R23) is an Omega-N-methylarginine; alternate. O-linked (GlcNAc) serine glycosylation is present at S27. Residue R30 is modified to Omega-N-methylarginine. At Y43 the chain carries Phosphotyrosine. A phosphoserine mark is found at S56, S66, and S102. One can recognise an IF rod domain in the interval E89–L400. Residues L93–L124 form a coil 1A region. The tract at residues R125 to L137 is linker 1. The tract at residues Y138–L233 is coil 1B. A linker 12 region spans residues Q234–P252. The coil 2A stretch occupies residues D253–K271. Residues N272–F280 form a linker 2 region. The interval K281–E396 is coil 2B. Residues A381–K391 form an epitope; recognized by IF-specific monoclonal antibody region. Residues E397–Y443 are tail, subdomain A. Residues E397 to D549 are tail. The segment at T444–D549 is tail, subdomain B (acidic). The tract at residues K462–D549 is disordered. Over residues P471–K534 the composition is skewed to acidic residues. S472 is modified (phosphoserine). A Phosphothreonine modification is found at T526. Residues K535–D549 show a composition bias toward basic and acidic residues.

This sequence belongs to the intermediate filament family. Forms homodimers (in vitro). Forms heterodimers with NEFH or NEFM; which can further hetero-oligomerize (in vitro). Forms heterodimers with INA (in vitro). Interacts with ARHGEF28. Interacts with TRIM2. Post-translationally, O-glycosylated. In terms of processing, phosphorylated in the head and rod regions by the PKC kinase PKN1, leading to the inhibition of polymerization. Ubiquitinated in the presence of TRIM2 and UBE2D1.

The protein resides in the cell projection. It is found in the axon. The protein localises to the cytoplasm. Its subcellular location is the cytoskeleton. Neurofilaments usually contain three intermediate filament proteins: NEFL, NEFM, and NEFH which are involved in the maintenance of neuronal caliber. May additionally cooperate with the neuronal intermediate filament proteins PRPH and INA to form neuronal filamentous networks. This Sus scrofa (Pig) protein is Neurofilament light polypeptide (NEFL).